Here is a 362-residue protein sequence, read N- to C-terminus: Transcriptional repressor PifC (362 aa).

Functionally, transcription repression of its own gene by binding to the PIF operator (pifO) and replication initiation from the primary origin (ori-1). Transcriptional repressor of the pifA and pifB. This chain is Transcriptional repressor PifC (pifC), found in Escherichia coli (strain K12).